The sequence spans 66 residues: ATP synthase protein 8 (66 aa).

Residues 8-24 form a helical membrane-spanning segment; sequence PWPMVIMSMILTLFYIT. At Lys-54 the chain carries N6-acetyllysine; alternate. Lys-54 is modified (N6-succinyllysine; alternate). At Lys-57 the chain carries N6-acetyllysine.

It belongs to the ATPase protein 8 family. As to quaternary structure, F-type ATPases have 2 components, CF(1) - the catalytic core - and CF(0) - the membrane proton channel. Component of an ATP synthase complex composed of ATP5PB, ATP5MC1, ATP5F1E, ATP5PD, ATP5ME, ATP5PF, ATP5MF, MT-ATP6, MT-ATP8, ATP5F1A, ATP5F1B, ATP5F1D, ATP5F1C, ATP5PO, ATP5MG, ATP5MK and ATP5MJ. Interacts with PRICKLE3.

Its subcellular location is the mitochondrion membrane. Functionally, mitochondrial membrane ATP synthase (F(1)F(0) ATP synthase or Complex V) produces ATP from ADP in the presence of a proton gradient across the membrane which is generated by electron transport complexes of the respiratory chain. F-type ATPases consist of two structural domains, F(1) - containing the extramembraneous catalytic core and F(0) - containing the membrane proton channel, linked together by a central stalk and a peripheral stalk. During catalysis, ATP synthesis in the catalytic domain of F(1) is coupled via a rotary mechanism of the central stalk subunits to proton translocation. Part of the complex F(0) domain. Minor subunit located with subunit a in the membrane. This is ATP synthase protein 8 (MT-ATP8) from Alouatta sara (Bolivian red howler monkey).